Consider the following 94-residue polypeptide: Phosphoribosyl-ATP pyrophosphatase (94 aa).

The protein belongs to the PRA-PH family.

It localises to the cytoplasm. The catalysed reaction is 1-(5-phospho-beta-D-ribosyl)-ATP + H2O = 1-(5-phospho-beta-D-ribosyl)-5'-AMP + diphosphate + H(+). The protein operates within amino-acid biosynthesis; L-histidine biosynthesis; L-histidine from 5-phospho-alpha-D-ribose 1-diphosphate: step 2/9. In Pyrobaculum calidifontis (strain DSM 21063 / JCM 11548 / VA1), this protein is Phosphoribosyl-ATP pyrophosphatase.